Here is a 321-residue protein sequence, read N- to C-terminus: Epiphycan (321 aa).

Residues 1-19 form the signal peptide; it reads MKALARLIVGLLILDAAVT. O-linked (GalNAc...) threonine glycosylation occurs at Thr60. An O-linked (Xyl...) (dermatan sulfate) serine glycan is attached at Ser64. Residues 64–100 are disordered; that stretch reads SGNRELLTPPPQPEEAEEEEEEESTPRLIDGSSPQEP. Over residues 77–86 the composition is skewed to acidic residues; sequence EEAEEEEEEE. An O-linked (GalNAc...) serine glycan is attached at Ser95. The LRRNT domain occupies 105–142; sequence VLGPQTNEDFPTCLLCTCISTTVYCDDHELDAIPPLPK. Cys117 and Cys129 are joined by a disulfide. LRR repeat units lie at residues 143 to 164, 167 to 188, 191 to 212, 237 to 257, and 258 to 279; these read NTAY…DFAS, DLRR…AFRK, QLRE…PTTL, DLHH…PLPE, and NLRA…TFCN. Cys278 and Cys311 are oxidised to a cystine. Asn282 is a glycosylation site (N-linked (GlcNAc...) asparagine). One copy of the LRR 6 repeat lies at 289-309; that stretch reads ALEDIRLDGNPINLSKTPQAY.

It belongs to the small leucine-rich proteoglycan (SLRP) family. SLRP class III subfamily. In terms of processing, a long and a short form present in approximately equimolar amounts may arise by proteolysis or cleavage by exopeptidases. The O-linked polysaccharides on Thr-60 and Ser-95 are probably the mucin type linked to GalNAc. There is one glycosaminoglycan chain, known to be dermatan sulfate, and it is probably the O-glycosylation at Ser-64. In terms of tissue distribution, preferentially expressed in the zone of flattened chondrocytes of the developing limb cartilage.

Its subcellular location is the secreted. The protein resides in the extracellular space. It is found in the extracellular matrix. May have a role in bone formation and also in establishing the ordered structure of cartilage through matrix organization. This Bos taurus (Bovine) protein is Epiphycan (EPYC).